A 232-amino-acid chain; its full sequence is Enolase-phosphatase E1 (232 aa).

The protein belongs to the HAD-like hydrolase superfamily. MasA/MtnC family. In terms of assembly, monomer. Mg(2+) serves as cofactor.

It carries out the reaction 5-methylsulfanyl-2,3-dioxopentyl phosphate + H2O = 1,2-dihydroxy-5-(methylsulfanyl)pent-1-en-3-one + phosphate. It participates in amino-acid biosynthesis; L-methionine biosynthesis via salvage pathway; L-methionine from S-methyl-5-thio-alpha-D-ribose 1-phosphate: step 3/6. Its pathway is amino-acid biosynthesis; L-methionine biosynthesis via salvage pathway; L-methionine from S-methyl-5-thio-alpha-D-ribose 1-phosphate: step 4/6. Functionally, bifunctional enzyme that catalyzes the enolization of 2,3-diketo-5-methylthiopentyl-1-phosphate (DK-MTP-1-P) into the intermediate 2-hydroxy-3-keto-5-methylthiopentenyl-1-phosphate (HK-MTPenyl-1-P), which is then dephosphorylated to form the acireductone 1,2-dihydroxy-3-keto-5-methylthiopentene (DHK-MTPene). This chain is Enolase-phosphatase E1, found in Xanthomonas oryzae pv. oryzae (strain KACC10331 / KXO85).